Reading from the N-terminus, the 447-residue chain is Tubulin beta chain (447 aa).

Residues Gln11, Glu69, Ser138, Gly142, Thr143, Gly144, Asn204, and Asn226 each contribute to the GTP site. Glu69 lines the Mg(2+) pocket. The disordered stretch occupies residues 424–447; it reads QYQEASVSEGEEEYDEEAPLEGEE. Over residues 432–447 the composition is skewed to acidic residues; that stretch reads EGEEEYDEEAPLEGEE.

It belongs to the tubulin family. Dimer of alpha and beta chains. A typical microtubule is a hollow water-filled tube with an outer diameter of 25 nm and an inner diameter of 15 nM. Alpha-beta heterodimers associate head-to-tail to form protofilaments running lengthwise along the microtubule wall with the beta-tubulin subunit facing the microtubule plus end conferring a structural polarity. Microtubules usually have 13 protofilaments but different protofilament numbers can be found in some organisms and specialized cells. Requires Mg(2+) as cofactor.

The protein resides in the cytoplasm. The protein localises to the cytoskeleton. Its function is as follows. Tubulin is the major constituent of microtubules, a cylinder consisting of laterally associated linear protofilaments composed of alpha- and beta-tubulin heterodimers. Microtubules grow by the addition of GTP-tubulin dimers to the microtubule end, where a stabilizing cap forms. Below the cap, tubulin dimers are in GDP-bound state, owing to GTPase activity of alpha-tubulin. The polypeptide is Tubulin beta chain (TUB1) (Cercospora beticola (Sugarbeet leaf spot fungus)).